Reading from the N-terminus, the 423-residue chain is Glutamyl-tRNA reductase (423 aa).

Residues Thr49–Arg52, Ser109, Glu114–Gln116, and Gln120 each bind substrate. Cys50 functions as the Nucleophile in the catalytic mechanism. Residue Gly189–Gly194 coordinates NADP(+).

This sequence belongs to the glutamyl-tRNA reductase family. In terms of assembly, homodimer.

The enzyme catalyses (S)-4-amino-5-oxopentanoate + tRNA(Glu) + NADP(+) = L-glutamyl-tRNA(Glu) + NADPH + H(+). It participates in porphyrin-containing compound metabolism; protoporphyrin-IX biosynthesis; 5-aminolevulinate from L-glutamyl-tRNA(Glu): step 1/2. It functions in the pathway porphyrin-containing compound metabolism; chlorophyll biosynthesis. Its function is as follows. Catalyzes the NADPH-dependent reduction of glutamyl-tRNA(Glu) to glutamate 1-semialdehyde (GSA). This is Glutamyl-tRNA reductase from Chlorobium limicola (strain DSM 245 / NBRC 103803 / 6330).